The following is a 261-amino-acid chain: Cathepsin G (261 aa).

Positions 1–18 (MQPLLLLLTFILLQGDEA) are cleaved as a signal peptide. Residues 19 to 20 (GK) constitute a propeptide, activation peptide. The tract at residues 21–25 (IIGGR) is important for antimicrobial activity. The 223-residue stretch at 21–243 (IIGGREARPH…FMPWIKRTMR (223 aa)) folds into the Peptidase S1 domain. Cys-49 and Cys-65 form a disulfide bridge. His-64 (charge relay system) is an active-site residue. A glycan (N-linked (GlcNAc...) asparagine) is linked at Asn-71. Residues 97 to 111 (HPDYNPQNIRNDIML) are important for antimicrobial activity. Asp-108 functions as the Charge relay system in the catalytic mechanism. 2 disulfides stabilise this stretch: Cys-142–Cys-207 and Cys-172–Cys-186. Ser-201 serves as the catalytic Charge relay system.

This sequence belongs to the peptidase S1 family. As to expression, in adult, detected only in bone marrow where expression is restricted to a small population of early myeloid cells.

It is found in the cell membrane. It localises to the cytoplasmic granule. The protein resides in the secreted. Its subcellular location is the cytoplasm. The protein localises to the cytosol. It is found in the lysosome. It localises to the nucleus. It carries out the reaction Specificity similar to chymotrypsin C.. With respect to regulation, inhibited by chymostatin, phenylmethanesulfonyl fluoride and diisopropyl fluorophosphate. Its function is as follows. Serine protease with trypsin- and chymotrypsin-like specificity. Also displays antibacterial activity against Gram-negative and Gram-positive bacteria independent of its protease activity. Prefers Phe and Tyr residues in the P1 position of substrates but also cleaves efficiently after Trp and Leu. Shows a preference for negatively charged amino acids in the P2' position and for aliphatic amino acids both upstream and downstream of the cleavage site. Required for recruitment and activation of platelets which is mediated by the F2RL3/PAR4 platelet receptor. Binds reversibly to and stimulates B cells and CD4(+) and CD8(+) T cells. Also binds reversibly to natural killer (NK) cells and enhances NK cell cytotoxicity through its protease activity. Cleaves complement C3. Cleaves vimentin. Cleaves thrombin receptor F2R/PAR1. Cleaves the synovial mucin-type protein PRG4/lubricin. Cleaves and activates IL36G which promotes expression of chemokines CXCL1 and CXLC8 in keratinocytes. Cleaves IL33 into mature forms which have greater activity than the unprocessed form. Cleaves coagulation factor F8 to produce a partially activated form. Also cleaves and activates coagulation factor F10. Cleaves leukocyte cell surface protein SPN/CD43 to release its extracellular domain and trigger its intramembrane proteolysis by gamma-secretase, releasing the CD43 cytoplasmic tail chain (CD43-ct) which translocates to the nucleus. During apoptosis, cleaves SMARCA2/BRM to produce a 160 kDa cleavage product which localizes to the cytosol. Cleaves MBP in B cell lysosomes at '221-Phe-|-Lys-222', degrading the major immunogenic MBP epitope and preventing the activation of MBP-specific autoreactive T cells. Cleaves annexin ANXA1 and antimicrobial peptide CAMP to produce peptides which act on neutrophil N-formyl peptide receptors to enhance the release of CXCL2. Acts as a ligand for the N-formyl peptide receptor FPR1, enhancing phagocyte chemotaxis. Has antibacterial activity against the Gram-negative bacteria N.gonorrhoeae and P.aeruginosa. Likely to act against N.gonorrhoeae by interacting with N.gonorrhoeae penA/PBP2. Exhibits potent antimicrobial activity against the Gram-positive bacterium L.monocytogenes. Has antibacterial activity against the Gram-positive bacterium S.aureus and degrades S.aureus biofilms, allowing polymorphonuclear leukocytes to penetrate the biofilm and phagocytose bacteria. Has antibacterial activity against M.tuberculosis. Induces platelet aggregation which is strongly potentiated in the presence of ELANE. This is Cathepsin G (Ctsg) from Mus musculus (Mouse).